Consider the following 468-residue polypeptide: MDFKKDRINMVDGQTAKKTVFATGIGNAMEWFDFGVYAYTTAYIGANFFSPVQNPEIQQIFTFAALAIAFLLRPIGGIVFGIIGDKYGRKVVLTTTIILMALSTLTIGVLPNYDMIGLWAPALLLLARILQGFSTGGEYAGAMTYIAEISPDKKRNSLGSGLEIGTLSGYIAASIMIALLSFFLSDAQMEAWGWRIPFILGLFLGLFGLYLRRKLEESPIYENDVETPARDNIGFFTIIRYYFKDILVCFVAVVFFNVTNYTVTAYLPTYLGQIVKIDETTTSVLITCVMAVMIPLALFFGKLADKIGEKKVFLIGTGGLTLLSIVAFSLLNTKSLPFIILGVFILGFFLSTYEATMPGSLPTMFFTHIRYRTLAVTFNISVSLFGGTTPLVNSWLVESTGNIYAPAYYLTAISIIGFIVIAVLHVSTAGKSLKGSYPNVDNKKDLEFYESNPKKALWWIKVKKNKNA.

A run of 12 helical transmembrane segments spans residues 20-42 (VFAT…YTTA), 63-83 (FAAL…FGII), 91-111 (VVLT…GVLP), 115-135 (MIGL…GFST), 164-184 (IGTL…SFFL), 191-211 (AWGW…GLYL), 246-266 (ILVC…VTAY), 284-304 (VLIT…GKLA), 312-332 (VFLI…SLLN), 336-356 (LPFI…YEAT), 376-396 (VTFN…NSWL), and 403-423 (IYAP…VIAV).

It belongs to the major facilitator superfamily. Metabolite:H+ Symporter (MHS) family (TC 2.A.1.6) family.

The protein resides in the cell membrane. May be a proton symporter involved in the uptake of osmolytes such as proline and glycine betaine. This is Putative proline/betaine transporter (proP) from Staphylococcus haemolyticus (strain JCSC1435).